Consider the following 380-residue polypeptide: ATP phosphoribosyltransferase regulatory subunit (380 aa).

This sequence belongs to the class-II aminoacyl-tRNA synthetase family. HisZ subfamily. As to quaternary structure, heteromultimer composed of HisG and HisZ subunits.

The protein resides in the cytoplasm. It participates in amino-acid biosynthesis; L-histidine biosynthesis; L-histidine from 5-phospho-alpha-D-ribose 1-diphosphate: step 1/9. Required for the first step of histidine biosynthesis. May allow the feedback regulation of ATP phosphoribosyltransferase activity by histidine. The polypeptide is ATP phosphoribosyltransferase regulatory subunit (Thermoanaerobacter pseudethanolicus (strain ATCC 33223 / 39E) (Clostridium thermohydrosulfuricum)).